Reading from the N-terminus, the 215-residue chain is Myelin protein zero-like protein 2 (215 aa).

The first 26 residues, 1–26 (MYGKSPTRAVLFLLGLQLTALWPTAA), serve as a signal peptide directing secretion. Positions 27 to 141 (VEIYTPRVLE…DGLIGEIQLS (115 aa)) constitute an Ig-like V-type domain. At 27–154 (VEIYTPRVLE…TVRFSEIHFL (128 aa)) the chain is on the extracellular side. 2 N-linked (GlcNAc...) asparagine glycosylation sites follow: asparagine 39 and asparagine 118. Cysteine 47 and cysteine 123 are disulfide-bonded. The helical transmembrane segment at 155–175 (ALAIGSACALMVIIVIVVVLF) threads the bilayer. The Cytoplasmic segment spans residues 176-215 (QHFRKKRRAERAHRVVEIKSKEEEKLNQEKKASVSLEYTD).

It belongs to the myelin P0 protein family.

It is found in the membrane. Its function is as follows. Mediates homophilic cell-cell adhesion. The polypeptide is Myelin protein zero-like protein 2 (MPZL2) (Bos taurus (Bovine)).